A 356-amino-acid polypeptide reads, in one-letter code: Aromatic dipeptide epimerase (356 aa).

Substrate-binding positions include T136 and 161 to 163 (KVK). Positions 191, 219, and 244 each coordinate Mg(2+). Substrate is bound by residues K268 and 320–322 (DLD).

This sequence belongs to the mandelate racemase/muconate lactonizing enzyme family. Mg(2+) serves as cofactor.

In terms of biological role, has epimerase activity with a variety of hydrophobic dipeptides (in vitro). Enzyme activity is highest with L-Phe-L-Tyr, but is still relatively low, suggesting that L-Phe-L-Tyr is not the physiological substrate. This chain is Aromatic dipeptide epimerase, found in Herpetosiphon aurantiacus (strain ATCC 23779 / DSM 785 / 114-95).